We begin with the raw amino-acid sequence, 681 residues long: Potassium-transporting ATPase ATP-binding subunit 1 (681 aa).

The next 4 membrane-spanning stretches (helical) occupy residues 30–50, 59–79, 216–236, and 255–275; these read LLVY…FFGI, LAIA…EAIA, ILLV…LPFT, and IALL…SIGI. The active-site 4-aspartylphosphate intermediate is Asp306. Residues Asp343, Glu347, 376–383, and Lys394 contribute to the ATP site; that span reads FTATTRMS. Asp517 and Asp521 together coordinate Mg(2+). Helical transmembrane passes span 587–607, 615–635, and 661–681; these read FAII…LNLM, AILS…PLSL, and LIAP…LGIV.

It belongs to the cation transport ATPase (P-type) (TC 3.A.3) family. Type IA subfamily. As to quaternary structure, the system is composed of three essential subunits: KdpA, KdpB and KdpC.

It is found in the cell membrane. The enzyme catalyses K(+)(out) + ATP + H2O = K(+)(in) + ADP + phosphate + H(+). Functionally, part of the high-affinity ATP-driven potassium transport (or Kdp) system, which catalyzes the hydrolysis of ATP coupled with the electrogenic transport of potassium into the cytoplasm. This subunit is responsible for energy coupling to the transport system and for the release of the potassium ions to the cytoplasm. This is Potassium-transporting ATPase ATP-binding subunit 1 from Listeria innocua serovar 6a (strain ATCC BAA-680 / CLIP 11262).